The chain runs to 105 residues: Nucleoid-associated protein ABO_1774 (105 aa).

The disordered stretch occupies residues 85–105; the sequence is QQQDSMQNMAGGFPFPPGFKP.

This sequence belongs to the YbaB/EbfC family. As to quaternary structure, homodimer.

The protein resides in the cytoplasm. Its subcellular location is the nucleoid. Functionally, binds to DNA and alters its conformation. May be involved in regulation of gene expression, nucleoid organization and DNA protection. This Alcanivorax borkumensis (strain ATCC 700651 / DSM 11573 / NCIMB 13689 / SK2) protein is Nucleoid-associated protein ABO_1774.